The chain runs to 460 residues: Orexin receptor type 2 (460 aa).

The Extracellular segment spans residues 1-54; the sequence is MSSTKLEDSLSRRNWSSASELNETQEPFLNPTDYDDEEFLRYLWREYLHPKEYE. N-linked (GlcNAc...) asparagine glycosylation is found at Asn-14 and Asn-22. The segment at 33 to 49 is required for response to orexin-A; sequence DYDDEEFLRYLWREYLH. The helical transmembrane segment at 55–75 threads the bilayer; sequence WVLIAGYIIVFVVALIGNVLV. The Cytoplasmic segment spans residues 76-88; it reads CVAVWKNHHMRTV. The chain crosses the membrane as a helical span at residues 89–110; it reads TNYFIVNLSLADVLVTITCLPA. Residues 111-127 are Extracellular-facing; the sequence is TLVVDITETWFFGQSLC. Cys-127 and Cys-210 are joined by a disulfide. A helical membrane pass occupies residues 128 to 150; it reads KVIPYLQTVSVSVSVLTLSCIAL. At 151–170 the chain is on the cytoplasmic side; it reads DRWYAICHPLMFKSTAKRAR. A helical transmembrane segment spans residues 171 to 191; sequence NSIVVIWIVSCIIMIPQAIVM. At 192-222 the chain is on the extracellular side; that stretch reads ECSSMLPGLANKTTLFTVCDEHWGGEVYPKM. An N-linked (GlcNAc...) asparagine glycan is attached at Asn-202. A helical transmembrane segment spans residues 223-243; the sequence is YHICFFLVTYMAPLCLMILAY. The Cytoplasmic segment spans residues 244–304; sequence LQIFRKLWCR…QIRARRKTAR (61 aa). A helical membrane pass occupies residues 305–326; sequence MLMVVLLVFAICYLPISILNVL. The Extracellular segment spans residues 327–342; it reads KRVFGMFTHTEDRETV. The helical transmembrane segment at 343–366 threads the bilayer; the sequence is YAWFTFSHWLVYANSAANPIIYNF. The Cytoplasmic portion of the chain corresponds to 367–460; it reads LSGKFREEFK…SSLLSTWLEV (94 aa).

This sequence belongs to the G-protein coupled receptor 1 family. As to expression, widely expressed. Isoform 2 not detected in skeletal muscle and kidney.

The protein resides in the cell membrane. Nonselective, high-affinity receptor for both orexin-A and orexin-B neuropeptides. Triggers an increase in cytoplasmic Ca(2+) levels in response to orexin-A binding. The polypeptide is Orexin receptor type 2 (Hcrtr2) (Mus musculus (Mouse)).